Here is a 140-residue protein sequence, read N- to C-terminus: Pro-vaccinia growth factor (140 aa).

A signal peptide spans 1-18 (MLINYLMLLFAAMIIRSF). Topologically, residues 19–100 (ADSGNAIETT…SEKPNTTTSY (82 aa)) are extracellular. An N-linked (GlcNAc...) asparagine; by host glycan is attached at asparagine 34. An EGF-like domain is found at 41–81 (AIRLCGPEGDGYCLHGDCIHARDIDGMYCRCSHGYTGIRCQ). 3 cysteine pairs are disulfide-bonded: cysteine 45/cysteine 58, cysteine 53/cysteine 69, and cysteine 71/cysteine 80. Asparagine 95 carries an N-linked (GlcNAc...) asparagine; by host glycan. The chain crosses the membrane as a helical span at residues 101–121 (IPSPGIMLVLVGIIIITCCLL). Residues 122-140 (SVYRFTRRTKLPLQDMVVP) are Cytoplasmic-facing.

It belongs to the orthopoxvirus OPG019 family. In terms of assembly, vaccinia growth factor interacts with host EGFR and promotes EGFR dimerization.

It is found in the host membrane. Its subcellular location is the secreted. Functionally, stimulates cellular proliferation (hyperplasia)and mobility around infected cells to promote rapid and efficient spread of infection. This effect is beneficial for virus replication in vivo, because poxviruses replicate possibly better in proliferating cells than in quiescent cells. Acts by binding host EGFR, inducing its dimerization, autophosphorylation and leading to activation of several cellular pathways regulating cell proliferation or cell survival. The activation by host EGFR of mitogen activated protein kinases (MAPK) and extracellular-signal regulated kinases (ERK) are essential for the positive effect of vaccinia growth factor on poxvirus virulence in vivo. This chain is Pro-vaccinia growth factor (OPG019), found in Homo sapiens (Human).